Here is a 310-residue protein sequence, read N- to C-terminus: ADP-L-glycero-D-manno-heptose-6-epimerase (310 aa).

NADP(+) is bound by residues 10-11, 31-32, Lys-38, Lys-53, 75-79, and Asn-92; these read FI, DN, and EGACS. Residue Tyr-140 is the Proton acceptor of the active site. Residue Lys-144 coordinates NADP(+). A substrate-binding site is contributed by Asn-169. 2 residues coordinate NADP(+): Val-170 and Lys-178. Lys-178 functions as the Proton acceptor in the catalytic mechanism. Residues Ser-180, His-187, 201-204, Arg-209, and Tyr-272 each bind substrate; that span reads FEGS.

This sequence belongs to the NAD(P)-dependent epimerase/dehydratase family. HldD subfamily. In terms of assembly, homopentamer. The cofactor is NADP(+).

The catalysed reaction is ADP-D-glycero-beta-D-manno-heptose = ADP-L-glycero-beta-D-manno-heptose. It participates in nucleotide-sugar biosynthesis; ADP-L-glycero-beta-D-manno-heptose biosynthesis; ADP-L-glycero-beta-D-manno-heptose from D-glycero-beta-D-manno-heptose 7-phosphate: step 4/4. In terms of biological role, catalyzes the interconversion between ADP-D-glycero-beta-D-manno-heptose and ADP-L-glycero-beta-D-manno-heptose via an epimerization at carbon 6 of the heptose. In Cronobacter sakazakii (strain ATCC BAA-894) (Enterobacter sakazakii), this protein is ADP-L-glycero-D-manno-heptose-6-epimerase.